The sequence spans 297 residues: Putative lipid kinase MamU (297 aa).

In terms of domain architecture, DAGKc spans 43 to 131; the sequence is EGKDMGRMVR…MDVGRVNDRY (89 aa). 68 to 74 serves as a coordination point for ATP; that stretch reads GDGSLSR. The Proton acceptor role is filled by glutamate 274.

It belongs to the diacylglycerol/lipid kinase family.

It is found in the cytoplasm. Might phosphorylate lipids. The polypeptide is Putative lipid kinase MamU (Magnetospirillum gryphiswaldense (strain DSM 6361 / JCM 21280 / NBRC 15271 / MSR-1)).